Consider the following 264-residue polypeptide: Thymidylate synthase (264 aa).

Arg21 lines the dUMP pocket. His51 is a binding site for (6R)-5,10-methylene-5,6,7,8-tetrahydrofolate. A dUMP-binding site is contributed by 126–127; the sequence is RR. Cys146 (nucleophile) is an active-site residue. DUMP is bound by residues 166-169, Asn177, and 207-209; these read RSAD and HIY. Residue Asp169 participates in (6R)-5,10-methylene-5,6,7,8-tetrahydrofolate binding. Ala263 serves as a coordination point for (6R)-5,10-methylene-5,6,7,8-tetrahydrofolate.

This sequence belongs to the thymidylate synthase family. Bacterial-type ThyA subfamily. As to quaternary structure, homodimer.

It is found in the cytoplasm. The enzyme catalyses dUMP + (6R)-5,10-methylene-5,6,7,8-tetrahydrofolate = 7,8-dihydrofolate + dTMP. Its pathway is pyrimidine metabolism; dTTP biosynthesis. Its function is as follows. Catalyzes the reductive methylation of 2'-deoxyuridine-5'-monophosphate (dUMP) to 2'-deoxythymidine-5'-monophosphate (dTMP) while utilizing 5,10-methylenetetrahydrofolate (mTHF) as the methyl donor and reductant in the reaction, yielding dihydrofolate (DHF) as a by-product. This enzymatic reaction provides an intracellular de novo source of dTMP, an essential precursor for DNA biosynthesis. This is Thymidylate synthase from Vesicomyosocius okutanii subsp. Calyptogena okutanii (strain HA).